The chain runs to 535 residues: Cytochrome c oxidase subunit 1 (535 aa).

A helical membrane pass occupies residues 21 to 43 (VLYFIFALFSAMIGTGLSAIIRL). 2 residues coordinate Ca(2+): Glu44 and Gly49. 6 helical membrane-spanning segments follow: residues 63–85 (VITAHAILMIFFFVMPALVGGFG), 106–128 (ISFWLLVPSLILILTSALVEAGA), 153–175 (IFSLHLSGFSSLLGAINFITTFI), 188–210 (PLFAWAVLFTAILLLLSLPVLAA), 242–264 (YWWNHPEVYILIIPGFGIISHAV), and 271–293 (PVFGVQGMIYAMWSIGLLGFCVW). His67 serves as a coordination point for Fe(II)-heme a. A Cu cation-binding site is contributed by His246. Positions 246 to 250 (HPEVY) form a cross-link, 1'-histidyl-3'-tyrosine (His-Tyr). Tyr250 contributes to the O2 binding site. Residues His295 and His296 each coordinate Cu cation. 2 helical membrane passes run 308-330 (AYFTSATMVIAVPTSIKIFSWLA) and 342-364 (TALFALGFIFLFTIGGLTGVVLA). Mg(2+) is bound by residues His373 and Asp374. The next 3 membrane-spanning stretches (helical) occupy residues 379 to 401 (VAHFHYVLSMGAVFSIFCGWYLW), 414 to 436 (LSHIHFWLMFIGVNVTFFPMHFL), and 456 to 478 (NQVASLGSIISIVASIVFIYVVY). Heme a3 is bound at residue His381. Fe(II)-heme a is bound at residue His383.

Belongs to the heme-copper respiratory oxidase family. In terms of assembly, component of the cytochrome c oxidase (complex IV, CIV), a multisubunit enzyme composed of a catalytic core of 3 subunits and several supernumerary subunits. The complex exists as a monomer or a dimer and forms supercomplexes (SCs) in the inner mitochondrial membrane with ubiquinol-cytochrome c oxidoreductase (cytochrome b-c1 complex, complex III, CIII). Heme is required as a cofactor. It depends on Cu cation as a cofactor.

The protein resides in the mitochondrion inner membrane. It catalyses the reaction 4 Fe(II)-[cytochrome c] + O2 + 8 H(+)(in) = 4 Fe(III)-[cytochrome c] + 2 H2O + 4 H(+)(out). It functions in the pathway energy metabolism; oxidative phosphorylation. Its function is as follows. Component of the cytochrome c oxidase, the last enzyme in the mitochondrial electron transport chain which drives oxidative phosphorylation. The respiratory chain contains 3 multisubunit complexes succinate dehydrogenase (complex II, CII), ubiquinol-cytochrome c oxidoreductase (cytochrome b-c1 complex, complex III, CIII) and cytochrome c oxidase (complex IV, CIV), that cooperate to transfer electrons derived from NADH and succinate to molecular oxygen, creating an electrochemical gradient over the inner membrane that drives transmembrane transport and the ATP synthase. Cytochrome c oxidase is the component of the respiratory chain that catalyzes the reduction of oxygen to water. Electrons originating from reduced cytochrome c in the intermembrane space (IMS) are transferred via the dinuclear copper A center (CU(A)) of subunit 2 and heme A of subunit 1 to the active site in subunit 1, a binuclear center (BNC) formed by heme A3 and copper B (CU(B)). The BNC reduces molecular oxygen to 2 water molecules using 4 electrons from cytochrome c in the IMS and 4 protons from the mitochondrial matrix. The sequence is that of Cytochrome c oxidase subunit 1 (COX1) from Yarrowia lipolytica (strain CLIB 122 / E 150) (Yeast).